Here is a 234-residue protein sequence, read N- to C-terminus: uncharacterized protein (234 aa).

A run of 7 helical transmembrane segments spans residues leucine 25–leucine 45, leucine 57–alanine 77, leucine 85–methionine 105, alanine 108–tyrosine 128, alanine 142–serine 162, threonine 163–tryptophan 183, and tryptophan 203–leucine 223.

It belongs to the BI1 family.

The protein localises to the cell membrane. This is an uncharacterized protein from Lactococcus lactis subsp. lactis (strain IL1403) (Streptococcus lactis).